The primary structure comprises 403 residues: Synaptotagmin-7 (403 aa).

Over 1–16 (MYRDPEAASPGAPSRD) the chain is Vesicular. Residues 17 to 37 (VLLVSAIITVSLSVTVVLCGL) form a helical membrane-spanning segment. At 38 to 403 (CHWCQRKLGK…PVAQWHQLKA (366 aa)) the chain is on the cytoplasmic side. Residue Ser52 is modified to Phosphoserine. The interval 53–106 (LETVGTPDSGRGRSEKKAIKLPAGGKAVNTAPVPGQTPHDESDRRTEPRSSVSD) is disordered. Thr58 is modified (phosphothreonine). Ser61 is subject to Phosphoserine. Over residues 90-100 (PHDESDRRTEP) the composition is skewed to basic and acidic residues. Ser119 and Ser122 each carry phosphoserine. C2 domains follow at residues 135–255 (NLGR…TFWK) and 266–399 (SRGE…AQWH). Residues Asp166, Asp172, Asp225, Asp227, Ser230, Asp233, Asp297, Asp303, Asp357, Asp359, Ser362, and Asp365 each coordinate Ca(2+).

This sequence belongs to the synaptotagmin family. In terms of assembly, homodimer. Can also form heterodimers with SYT6, SYT9 and SYT10. Interacts with calmodulin (CALM1, CALM2 or CALM3). Interacts with CD63; required for localization to lysosomes. Interacts with APP. Requires Ca(2+) as cofactor. In terms of processing, palmitoylated at its vesicular N-terminus; palmitoylation is required for localization to lysosome and phagocytosis in macrophages. As to expression, expressed in a variety of adult and fetal tissues.

The protein localises to the cell membrane. Its subcellular location is the presynaptic cell membrane. The protein resides in the cytoplasmic vesicle. It is found in the secretory vesicle. It localises to the synaptic vesicle membrane. The protein localises to the lysosome membrane. Its subcellular location is the phagosome membrane. The protein resides in the peroxisome membrane. It is found in the secretory vesicle membrane. Its function is as follows. Ca(2+) sensor involved in Ca(2+)-dependent exocytosis of secretory and synaptic vesicles through Ca(2+) and phospholipid binding to the C2 domain. Ca(2+) induces binding of the C2-domains to phospholipid membranes and to assembled SNARE-complexes; both actions contribute to triggering exocytosis. SYT7 binds Ca(2+) with high affinity and slow kinetics compared to other synaptotagmins. Involved in Ca(2+)-triggered lysosomal exocytosis, a major component of the plasma membrane repair. Ca(2+)-regulated delivery of lysosomal membranes to the cell surface is also involved in the phagocytic uptake of particles by macrophages. Ca(2+)-triggered lysosomal exocytosis also plays a role in bone remodeling by regulating secretory pathways in osteoclasts and osteoblasts. In case of infection, involved in participates cell invasion by Trypanosoma cruzi via Ca(2+)-triggered lysosomal exocytosis. Involved in cholesterol transport from lysosome to peroxisome by promoting membrane contacts between lysosomes and peroxisomes: probably acts by promoting vesicle fusion by binding phosphatidylinositol-4,5-bisphosphate on peroxisomal membranes. Acts as a key mediator of synaptic facilitation, a process also named short-term synaptic potentiation: synaptic facilitation takes place at synapses with a low initial release probability and is caused by influx of Ca(2+) into the axon terminal after spike generation, increasing the release probability of neurotransmitters. Probably mediates synaptic facilitation by directly increasing the probability of release. May also contribute to synaptic facilitation by regulating synaptic vesicle replenishment, a process required to ensure that synaptic vesicles are ready for the arrival of the next action potential: SYT7 is required for synaptic vesicle replenishment by acting as a sensor for Ca(2+) and by forming a complex with calmodulin. Also acts as a regulator of Ca(2+)-dependent insulin and glucagon secretion in beta-cells. Triggers exocytosis by promoting fusion pore opening and fusion pore expansion in chromaffin cells. Also regulates the secretion of some non-synaptic secretory granules of specialized cells. In Homo sapiens (Human), this protein is Synaptotagmin-7.